The following is a 139-amino-acid chain: I-Kappa-B like protein N1 (139 aa).

3 ANK repeats span residues 16-48 (NGEN…QYLL), 54-87 (EGRK…DVNG), and 92-122 (TGDT…NINA).

This sequence belongs to the polydnaviridae I-Kappa-B-like protein family.

Suppresses the host immune response through NF-kappa-B inactivation. Possesses ankyrin repeat domain required for NF-kappa-B binding but lack the regulatory regions required for dissociation from NF-kappa-B and degradation. Therefore, prevents host NF-kappa-B release and subsequent activation. The sequence is that of I-Kappa-B like protein N1 (N2) from Microplitis demolitor bracovirus (isolate Webb) (MdBV).